We begin with the raw amino-acid sequence, 480 residues long: Lysosomal protective protein (480 aa).

An N-terminal signal peptide occupies residues 1 to 28; the sequence is MIRAAPPPLFLLLLLLLLLVSWASRGEA. Disulfide bonds link C88-C362, C240-C256, C241-C246, and C281-C331. The N-linked (GlcNAc...) asparagine glycan is linked to N145. S178 is an active-site residue. N-linked (GlcNAc...) asparagine glycosylation occurs at N333. Catalysis depends on residues D400 and H457.

This sequence belongs to the peptidase S10 family. In terms of assembly, heterodimer of a 32 kDa chain and a 20 kDa chain; disulfide-linked.

The protein localises to the lysosome. It carries out the reaction Release of a C-terminal amino acid with broad specificity.. Functionally, protective protein appears to be essential for both the activity of beta-galactosidase and neuraminidase, it associates with these enzymes and exerts a protective function necessary for their stability and activity. This protein is also a carboxypeptidase and can deamidate tachykinins. The polypeptide is Lysosomal protective protein (CTSA) (Homo sapiens (Human)).